The primary structure comprises 137 residues: ER-derived vesicles protein erv14 (137 aa).

Residues 1–9 (MMSFGSFVY) lie on the Cytoplasmic side of the membrane. The chain crosses the membrane as a helical span at residues 10-30 (IACLLLNGANMLLQIFCVIMF). The Extracellular segment spans residues 31–62 (SDLEMDYINPIDLCNKLNDLVMPEIISHTLVT). Residues 63 to 83 (LLLLLGKKWLLFLANLPLLVF) form a helical membrane-spanning segment. Topologically, residues 84–114 (HANQVIHKTHILDATEIFRQLGRHKRDNFIK) are cytoplasmic. The chain crosses the membrane as a helical span at residues 115-135 (VTFYLIMFFTLLYCMVMSLIQ). Residues 136-137 (EE) are Extracellular-facing.

It belongs to the cornichon family.

It is found in the endoplasmic reticulum. Its subcellular location is the membrane. The protein resides in the golgi apparatus membrane. Regulates export of the secretory proteins from the endoplasmic reticulum in COPII-coated vesicles. This Schizosaccharomyces pombe (strain 972 / ATCC 24843) (Fission yeast) protein is ER-derived vesicles protein erv14 (erv14).